A 1028-amino-acid chain; its full sequence is Collagen alpha-1(VI) chain (1028 aa).

Positions M1–A19 are cleaved as a signal peptide. Residues Q20–R256 are N-terminal globular domain. Positions D37–I235 constitute a VWFA 1 domain. N212 is a glycosylation site (N-linked (GlcNAc...) asparagine). A disordered region spans residues P254–G590. The segment at G257–D592 is triple-helical region. The Cell attachment site motif lies at R262 to D264. 2 stretches are compositionally biased toward basic and acidic residues: residues E268–D285 and K301–K334. A compositionally biased stretch (low complexity) spans R384–E394. A Cell attachment site motif is present at residues R442–D444. Over residues E457–P471 the composition is skewed to low complexity. A Cell attachment site motif is present at residues R478–D480. Residues P483–P493 are compositionally biased toward low complexity. Residues N516 and N537 are each glycosylated (N-linked (GlcNAc...) asparagine). Residues G550–N560 are compositionally biased toward acidic residues. The segment covering P579–G590 has biased composition (pro residues). The tract at residues E593–G1028 is C-terminal globular domain. VWFA domains lie at D615–V805 and D829–V1021. N804 and N896 each carry an N-linked (GlcNAc...) asparagine glycan.

Belongs to the type VI collagen family. As to quaternary structure, trimers composed of three different chains: alpha-1(VI), alpha-2(VI), and alpha-3(VI) or alpha-5(VI) or alpha-6(VI). Prolines at the third position of the tripeptide repeating unit (G-X-Y) are hydroxylated in some or all of the chains.

The protein localises to the secreted. It is found in the extracellular space. The protein resides in the extracellular matrix. Its function is as follows. Collagen VI acts as a cell-binding protein. This chain is Collagen alpha-1(VI) chain (COL6A1), found in Homo sapiens (Human).